The primary structure comprises 519 residues: bZIP transcription factor 30 (519 aa).

Disordered stretches follow at residues 1 to 30 (MGGG…IPKH), 45 to 83 (FRHP…QPSS), 108 to 202 (TGAG…RKPE), 222 to 295 (VLNS…TGRH), and 315 to 339 (SSLK…NSSA). Pro residues predominate over residues 51–61 (GAPPPPIPPIS). Residues 149-173 (SDVTFGFSSMMSQNQKSPPLSSLER) are compositionally biased toward polar residues. A compositionally biased stretch (basic and acidic residues) spans 187-202 (VKKEPREGFYKGRKPE). Composition is skewed to low complexity over residues 244–268 (SRGS…SASG) and 317–329 (LKLP…KVSP). Residues 330-339 (TNSGEGNSSA) show a composition bias toward polar residues. Residues 372–393 (KRVKRILANRVSAARSKERKTR) are basic motif. Positions 386–460 (RSKERKTRYM…SEKLNEEVQR (75 aa)) form a coiled coil. Positions 398–433 (LEHKVQTLQTEATTLSAQLTHLQRDSMGLTNQNSEL) are leucine-zipper. The tract at residues 465–519 (IGEPNRRQSGSSSSESKMSLNPEMFQQLSISQLQHQQMQHSNQCSTMKAKHTSND) is disordered. Low complexity-rich tracts occupy residues 473–483 (SGSSSSESKMS) and 490–509 (QQLS…NQCS).

In terms of assembly, interacts with WUS, HEC1, KNAT1, KNAT2, HAT1, BEL1, and NGA1. In terms of tissue distribution, expressed in inflorescence meristem, floral organ primordia, gynoecia, ovules and carpel margin meristem.

The protein resides in the nucleus. Its function is as follows. Transcription factor that acts as a repressor of reproductive development, meristem size and plant growth. Acts as a transcriptional repressor in inflorescence tissues. Interacts with well known regulators of meristem and gynoecium development such as WUS, HEC1, KNAT1, KNAT2, HAT1, BEL1 and NGA1. Acts as a positive regulator of JAG and OFP1 expression in developing gynoecia. The protein is bZIP transcription factor 30 of Arabidopsis thaliana (Mouse-ear cress).